Here is a 451-residue protein sequence, read N- to C-terminus: Sex peptide receptor-related protein 2 (451 aa).

The Extracellular segment spans residues 1–63 (MNYEVYCGNA…DNLEIVVYGQ (63 aa)). Residue Asn-15 is glycosylated (N-linked (GlcNAc...) asparagine). The helical transmembrane segment at 64–84 (IFPILVLFAVFANAAVALVLS) threads the bilayer. Topologically, residues 85–97 (KKHMITPTNVVLK) are cytoplasmic. Residues 98 to 118 (YMAIAELLVGLVPLPWTLFFF) traverse the membrane as a helical segment. Residues 119 to 140 (SMGNIKETHRLELWWCYLQKYS) are Extracellular-facing. Cys-134 and Cys-225 are disulfide-bonded. The helical transmembrane segment at 141 to 161 (MDAFPPVFHMIAMWLTVLLAA) threads the bilayer. At 162-183 (QRYVSISHPLHSRSACNVKNVR) the chain is on the cytoplasmic side. The chain crosses the membrane as a helical span at residues 184 to 204 (LATMIITVTSFLCGLPKSFDY). Residues 205 to 251 (EYETVHGWIYSHGNWTYASSCVMMPTAILTNMGQTVYFNIYFWTRAL) lie on the Extracellular side of the membrane. Asn-218 is a glycosylation site (N-linked (GlcNAc...) asparagine). The chain crosses the membrane as a helical span at residues 252–272 (GFIILPSFLLVLLNGLLIKGI). The Cytoplasmic segment spans residues 273 to 301 (RRAQRRKLRLLREKRSEEAARQRDSNSTS). The chain crosses the membrane as a helical span at residues 302–322 (LMLVAIVSIFLIVNLPQAIFM). The Extracellular portion of the chain corresponds to 323–334 (GLLCVCETFTIK). The helical transmembrane segment at 335–355 (IPILEGTFPAVFLIASNMIVI) threads the bilayer. At 356-451 (ATYPINFGIY…TQFTTMDRSD (96 aa)) the chain is on the cytoplasmic side.

The protein belongs to the G-protein coupled receptor 1 family. In terms of tissue distribution, expressed in head neurons including the ASE sensory neurons and the ASI and AWB chemosensory neurons, the midbody neurons SDQ, and motor neurons in the tail.

It localises to the cell membrane. Functionally, G-protein coupled receptor for the neuropeptide like protein nlp-38. Plays a role in several types of aversive gustatory associative learning including gustatory plasticity and salt avoidance learning. Its role in salt avoidance learning may be through activation of the transcription factor crh-1/CREB and de novo transcription and translation, which in turn promotes the formation of long-term memory. This chain is Sex peptide receptor-related protein 2, found in Caenorhabditis elegans.